A 248-amino-acid chain; its full sequence is Ribosomal RNA small subunit methyltransferase J (248 aa).

S-adenosyl-L-methionine contacts are provided by residues 98 to 99 (RD), 114 to 115 (ER), 150 to 151 (SS), and D168.

It belongs to the methyltransferase superfamily. RsmJ family.

Its subcellular location is the cytoplasm. The catalysed reaction is guanosine(1516) in 16S rRNA + S-adenosyl-L-methionine = N(2)-methylguanosine(1516) in 16S rRNA + S-adenosyl-L-homocysteine + H(+). Its function is as follows. Specifically methylates the guanosine in position 1516 of 16S rRNA. The protein is Ribosomal RNA small subunit methyltransferase J of Shewanella baltica (strain OS185).